The following is a 292-amino-acid chain: Elongation factor Ts (292 aa).

An involved in Mg(2+) ion dislocation from EF-Tu region spans residues 80-83 (TDFV).

The protein belongs to the EF-Ts family.

The protein localises to the cytoplasm. Associates with the EF-Tu.GDP complex and induces the exchange of GDP to GTP. It remains bound to the aminoacyl-tRNA.EF-Tu.GTP complex up to the GTP hydrolysis stage on the ribosome. This Ralstonia nicotianae (strain ATCC BAA-1114 / GMI1000) (Ralstonia solanacearum) protein is Elongation factor Ts.